A 177-amino-acid polypeptide reads, in one-letter code: Large ribosomal subunit protein uL6 (177 aa).

Belongs to the universal ribosomal protein uL6 family. Part of the 50S ribosomal subunit.

This protein binds to the 23S rRNA, and is important in its secondary structure. It is located near the subunit interface in the base of the L7/L12 stalk, and near the tRNA binding site of the peptidyltransferase center. This Hahella chejuensis (strain KCTC 2396) protein is Large ribosomal subunit protein uL6.